A 396-amino-acid polypeptide reads, in one-letter code: 1-deoxy-D-xylulose 5-phosphate reductoisomerase (396 aa).

NADPH is bound by residues Thr-17, Gly-18, Ser-19, Ile-20, Asn-47, and Asn-130. Lys-131 is a binding site for 1-deoxy-D-xylulose 5-phosphate. Glu-132 contributes to the NADPH binding site. Residue Asp-156 coordinates Mn(2+). Residues Ser-157, Glu-158, Ser-182, and His-205 each contribute to the 1-deoxy-D-xylulose 5-phosphate site. Glu-158 lines the Mn(2+) pocket. Residue Gly-211 coordinates NADPH. 1-deoxy-D-xylulose 5-phosphate is bound by residues Ser-218, Asn-223, Lys-224, and Glu-227. Glu-227 contributes to the Mn(2+) binding site.

Belongs to the DXR family. It depends on Mg(2+) as a cofactor. The cofactor is Mn(2+).

It carries out the reaction 2-C-methyl-D-erythritol 4-phosphate + NADP(+) = 1-deoxy-D-xylulose 5-phosphate + NADPH + H(+). It functions in the pathway isoprenoid biosynthesis; isopentenyl diphosphate biosynthesis via DXP pathway; isopentenyl diphosphate from 1-deoxy-D-xylulose 5-phosphate: step 1/6. Its function is as follows. Catalyzes the NADPH-dependent rearrangement and reduction of 1-deoxy-D-xylulose-5-phosphate (DXP) to 2-C-methyl-D-erythritol 4-phosphate (MEP). The protein is 1-deoxy-D-xylulose 5-phosphate reductoisomerase of Rhizobium johnstonii (strain DSM 114642 / LMG 32736 / 3841) (Rhizobium leguminosarum bv. viciae).